Reading from the N-terminus, the 110-residue chain is DNA-directed RNA polymerase subunit omega (110 aa).

It belongs to the RNA polymerase subunit omega family. In terms of assembly, the RNAP catalytic core consists of 2 alpha, 1 beta, 1 beta' and 1 omega subunit. When a sigma factor is associated with the core the holoenzyme is formed, which can initiate transcription.

It catalyses the reaction RNA(n) + a ribonucleoside 5'-triphosphate = RNA(n+1) + diphosphate. In terms of biological role, promotes RNA polymerase assembly. Latches the N- and C-terminal regions of the beta' subunit thereby facilitating its interaction with the beta and alpha subunits. The protein is DNA-directed RNA polymerase subunit omega of Mycobacterium leprae (strain Br4923).